The chain runs to 1032 residues: Exportin-T (1032 aa).

It belongs to the exportin family.

Its subcellular location is the nucleus. The protein resides in the cytoplasm. TRNA nucleus export receptor which facilitates tRNA translocation across the nuclear pore complex. Involved in pre-tRNA splicing, probably by affecting the interaction of pre-tRNA with splicing endonuclease. The polypeptide is Exportin-T (los1) (Aspergillus fumigatus (strain ATCC MYA-4609 / CBS 101355 / FGSC A1100 / Af293) (Neosartorya fumigata)).